The primary structure comprises 542 residues: Membrane protein insertase YidC (542 aa).

A run of 5 helical transmembrane segments spans residues 7–27 (LLVM…QQDF), 338–358 (FALL…IIGV), 417–437 (MGGC…YWTF), 455–475 (LSAQ…MFLL), and 494–514 (FMPV…VLYW).

The protein belongs to the OXA1/ALB3/YidC family. Type 1 subfamily. Interacts with the Sec translocase complex via SecD. Specifically interacts with transmembrane segments of nascent integral membrane proteins during membrane integration.

It is found in the cell inner membrane. Required for the insertion and/or proper folding and/or complex formation of integral membrane proteins into the membrane. Involved in integration of membrane proteins that insert both dependently and independently of the Sec translocase complex, as well as at least some lipoproteins. Aids folding of multispanning membrane proteins. In Actinobacillus pleuropneumoniae serotype 3 (strain JL03), this protein is Membrane protein insertase YidC.